We begin with the raw amino-acid sequence, 348 residues long: Protein RecA (348 aa).

68-75 lines the ATP pocket; the sequence is GPESSGKT.

The protein belongs to the RecA family.

The protein resides in the cytoplasm. Can catalyze the hydrolysis of ATP in the presence of single-stranded DNA, the ATP-dependent uptake of single-stranded DNA by duplex DNA, and the ATP-dependent hybridization of homologous single-stranded DNAs. It interacts with LexA causing its activation and leading to its autocatalytic cleavage. This is Protein RecA from Rhodococcus opacus (strain B4).